A 242-amino-acid polypeptide reads, in one-letter code: Myb-related protein MYBAS2 (242 aa).

2 consecutive HTH myb-type domains span residues Arg-5–Leu-61 and Lys-62–Ala-112. The H-T-H motif DNA-binding region spans Trp-33 to Leu-57. The Bipartite nuclear localization signal 1 motif lies at Lys-62–Arg-65. A DNA-binding region (H-T-H motif) is located at residues Trp-85 to Met-108. The Bipartite nuclear localization signal 2 signature appears at Arg-109–Ser-117. Positions Lys-110 to Cys-133 are disordered. Over residues Asn-118 to Cys-133 the composition is skewed to low complexity.

It localises to the nucleus. In terms of biological role, transcription factor. The polypeptide is Myb-related protein MYBAS2 (MYBAS2) (Oryza sativa subsp. japonica (Rice)).